The chain runs to 437 residues: Enolase (437 aa).

Residue Q166 coordinates (2R)-2-phosphoglycerate. The active-site Proton donor is the E208. Residues D245, E295, and D322 each coordinate Mg(2+). Residues K347, R376, S377, and K398 each coordinate (2R)-2-phosphoglycerate. K347 (proton acceptor) is an active-site residue.

The protein belongs to the enolase family. It depends on Mg(2+) as a cofactor.

The protein resides in the cytoplasm. It is found in the secreted. The protein localises to the cell surface. The enzyme catalyses (2R)-2-phosphoglycerate = phosphoenolpyruvate + H2O. It functions in the pathway carbohydrate degradation; glycolysis; pyruvate from D-glyceraldehyde 3-phosphate: step 4/5. In terms of biological role, catalyzes the reversible conversion of 2-phosphoglycerate (2-PG) into phosphoenolpyruvate (PEP). It is essential for the degradation of carbohydrates via glycolysis. The chain is Enolase from Lachnoclostridium phytofermentans (strain ATCC 700394 / DSM 18823 / ISDg) (Clostridium phytofermentans).